The chain runs to 198 residues: Proteasome subunit beta type-2 (198 aa).

This sequence belongs to the peptidase T1B family. The 26S proteasome consists of a 20S proteasome core and two 19S regulatory subunits. The 20S proteasome core is composed of 28 subunits that are arranged in four stacked rings, resulting in a barrel-shaped structure. The two end rings are each formed by seven alpha subunits, and the two central rings are each formed by seven beta subunits. The catalytic chamber with the active sites is on the inside of the barrel.

The protein resides in the cytoplasm. Its subcellular location is the nucleus. Functionally, non-catalytic component of the proteasome, a multicatalytic proteinase complex which is characterized by its ability to cleave peptides with Arg, Phe, Tyr, Leu, and Glu adjacent to the leaving group at neutral or slightly basic pH. The proteasome has an ATP-dependent proteolytic activity. In Dictyostelium discoideum (Social amoeba), this protein is Proteasome subunit beta type-2 (psmB2).